A 201-amino-acid chain; its full sequence is Protein LIGHT-DEPENDENT SHORT HYPOCOTYLS 2 (201 aa).

The span at 1–14 (MDLISQNHNNRNPN) shows a compositional bias: polar residues. Disordered regions lie at residues 1 to 37 (MDLISQNHNNRNPNTSLSTQTPSSFSSPPSSSRYENQ) and 151 to 201 (SRGV…GATQ). Residues 15–32 (TSLSTQTPSSFSSPPSSS) are compositionally biased toward low complexity. The 128-residue stretch at 33 to 160 (RYENQKRRDW…SRGVSYEKKR (128 aa)) folds into the ALOG domain. Residues 158–162 (KKRKR) carry the Nuclear localization signal motif.

The protein belongs to the plant homeotic and developmental regulators ALOG protein family.

The protein localises to the nucleus. Its function is as follows. Probable transcription regulator that acts as a developmental regulator by promoting cell growth in response to light. The protein is Protein LIGHT-DEPENDENT SHORT HYPOCOTYLS 2 (LSH2) of Arabidopsis thaliana (Mouse-ear cress).